The primary structure comprises 95 residues: Aspartyl/glutamyl-tRNA(Asn/Gln) amidotransferase subunit C (95 aa).

It belongs to the GatC family. As to quaternary structure, heterotrimer of A, B and C subunits.

It carries out the reaction L-glutamyl-tRNA(Gln) + L-glutamine + ATP + H2O = L-glutaminyl-tRNA(Gln) + L-glutamate + ADP + phosphate + H(+). The enzyme catalyses L-aspartyl-tRNA(Asn) + L-glutamine + ATP + H2O = L-asparaginyl-tRNA(Asn) + L-glutamate + ADP + phosphate + 2 H(+). Allows the formation of correctly charged Asn-tRNA(Asn) or Gln-tRNA(Gln) through the transamidation of misacylated Asp-tRNA(Asn) or Glu-tRNA(Gln) in organisms which lack either or both of asparaginyl-tRNA or glutaminyl-tRNA synthetases. The reaction takes place in the presence of glutamine and ATP through an activated phospho-Asp-tRNA(Asn) or phospho-Glu-tRNA(Gln). This is Aspartyl/glutamyl-tRNA(Asn/Gln) amidotransferase subunit C from Anaeromyxobacter sp. (strain Fw109-5).